A 1697-amino-acid polypeptide reads, in one-letter code: UDP-sugar-dependent glycosyltransferase 52 (1697 aa).

2 disordered regions span residues 20–40 (HSDSLSSVGSSSNRSNSNYEN) and 142–166 (STDLSNIKTTTTTTTTTTPPPLMIP). In terms of domain architecture, PH spans 234-332 (DYVLENYLYK…WYHEINRMQK (99 aa)). Disordered regions lie at residues 573 to 645 (FRSK…TTHE) and 707 to 756 (PLDK…KQSQ). Low complexity-rich tracts occupy residues 584–628 (QNSQ…SSSA) and 711–722 (QQQQQQQQQQQQ). GRAM domains are found at residues 658–793 (STFH…TKER) and 881–948 (IKIK…KKYS). Residues 739–749 (TDSDTDSESDF) are compositionally biased toward acidic residues. 4 disordered regions span residues 1011 to 1047 (SPSIASPSITPPSSTPPSSTTPSSTTPTITSPTIHST), 1062 to 1085 (DGENNSNNNNNNNNTNNTNKSNSF), 1110 to 1130 (SAQQQQQQQPKTTTTTTSTTT), and 1466 to 1488 (EHNNNNNNNNNNNNGENSDSNKS). 4 stretches are compositionally biased toward low complexity: residues 1026–1047 (PPSSTTPSSTTPTITSPTIHST), 1065–1084 (NNSNNNNNNNNTNNTNKSNS), 1112–1130 (QQQQQQQPKTTTTTTSTTT), and 1469–1479 (NNNNNNNNNNN). The FYVE-type zinc-finger motif lies at 1622 to 1685 (SSAPNSCMGC…VCDKCFNDLQ (64 aa)). Zn(2+)-binding residues include Cys-1628, Cys-1631, Cys-1647, Cys-1650, Cys-1655, Cys-1658, Cys-1677, and Cys-1680.

This sequence belongs to the glycosyltransferase 28 family.

It carries out the reaction a sterol + UDP-alpha-D-glucose = a sterol 3-beta-D-glucoside + UDP + H(+). Its function is as follows. Involved in the biosynthesis of sterol glucoside. Can use different sterols such as cholesterol, sitosterol, and ergosterol as sugar acceptors. The polypeptide is UDP-sugar-dependent glycosyltransferase 52 (ugt52) (Dictyostelium discoideum (Social amoeba)).